A 176-amino-acid polypeptide reads, in one-letter code: MGDPRKSKKKWMGPSHPWIKINLGKEQILIGKYGLRNKKEIWIAQTMIRNFRHQARSLLALPPAERNIREKQLIQKLYRMGILEKDNSTLDDILSLTEENYLERRLQTIVYKKGLARTIYQARQLITHGHIAISGRKVTSPGYVVLRGEEDLIDYYPTSPFKQNPPSQGEVNVEQA.

Positions 104 to 166 constitute an S4 RNA-binding domain; sequence RRLQTIVYKK…PTSPFKQNPP (63 aa).

It belongs to the universal ribosomal protein uS4 family. Part of the 30S ribosomal subunit. Contacts protein S5. The interaction surface between S4 and S5 is involved in control of translational fidelity.

Its function is as follows. One of the primary rRNA binding proteins, it binds directly to 16S rRNA where it nucleates assembly of the body of the 30S subunit. Functionally, with S5 and S12 plays an important role in translational accuracy. This Sulfolobus acidocaldarius (strain ATCC 33909 / DSM 639 / JCM 8929 / NBRC 15157 / NCIMB 11770) protein is Small ribosomal subunit protein uS4 (rps4).